We begin with the raw amino-acid sequence, 306 residues long: Protodermal factor 1 (306 aa).

Positions 1–23 are cleaved as a signal peptide; sequence MRGMVSFAVWALFAALLSQQLFA. The segment covering 40 to 56 has biased composition (low complexity); the sequence is PPSGSHGTPPSHTPPSS. Residues 40–156 form a disordered region; the sequence is PPSGSHGTPP…VVTPPSPIVD (117 aa). Residues 62-83 are compositionally biased toward pro residues; it reads PYDPSPSTPSHPSPPSHTPTPS. Over residues 84 to 99 the composition is skewed to low complexity; the sequence is TPSHTPTPHTPSHTPT. Residues 139 to 154 show a composition bias toward pro residues; sequence SPPPRTPVVVTPPSPI.

As to expression, confined to the shoot apical meristem (SAM) at the layer L1 in vegetative, infloresence and floral meristems, as well as in protoderm of organ primordia, including during embryogenesis. Also present in the tip of emerging lateral root primordia.

Functionally, may be involved in the regulation of meristem growth. The chain is Protodermal factor 1 (PDF1) from Arabidopsis thaliana (Mouse-ear cress).